A 188-amino-acid polypeptide reads, in one-letter code: Oleosin S2-2 (188 aa).

Ala2 carries the post-translational modification N-acetylalanine. Positions 2–51 (ATVERRVQVDPTDKRIHLQPQYEGDVGYGYGYGGRADYKSSGPSSNQIVA) are polar. 3 consecutive transmembrane segments (helical) span residues 49-69 (IVAL…AGLT), 74-94 (VIGL…IVPA), and 96-116 (ITIG…LTGL). The tract at residues 52-125 (LIVGVPVGGS…LSSVSWVLNY (74 aa)) is hydrophobic. The interval 164-188 (DKAHEAHDTSLTTETTEPGKTRRHT) is disordered. Positions 172–181 (TSLTTETTEP) are enriched in polar residues.

Belongs to the oleosin family.

It is found in the lipid droplet. The protein localises to the membrane. Its function is as follows. May have a structural role to stabilize the lipid body during desiccation of the seed by preventing coalescence of the oil. Probably interacts with both lipid and phospholipid moieties of lipid bodies. May also provide recognition signals for specific lipase anchorage in lipolysis during seedling growth. The sequence is that of Oleosin S2-2 (S2) from Brassica napus (Rape).